We begin with the raw amino-acid sequence, 340 residues long: DNA polymerase III subunit delta' (340 aa).

The DNA polymerase holoenzyme is a complex that contains 10 different types of subunits. These subunits are organized into 3 functionally essential subassemblies: the pol III core, the beta sliding clamp processivity factor and the clamp-loading complex. The pol III core (subunits alpha,epsilon and theta) contains the polymerase and the 3'-5' exonuclease proofreading activities. The polymerase is tethered to the template via the sliding clamp processivity factor. The clamp-loading complex assembles the beta processivity factor onto the primer template and plays a central role in the organization and communication at the replication fork. This complex contains delta, delta', psi and chi, and copies of either or both of two different DnaX proteins, gamma and tau. The composition of the holoenzyme is, therefore: (alpha,epsilon,theta)[2]-(gamma/tau)[3]-delta,delta', psi,chi-beta[4].

It carries out the reaction DNA(n) + a 2'-deoxyribonucleoside 5'-triphosphate = DNA(n+1) + diphosphate. In terms of biological role, DNA polymerase III is a complex, multichain enzyme responsible for most of the replicative synthesis in bacteria. This DNA polymerase also exhibits 3' to 5' exonuclease activity. This Yersinia pestis protein is DNA polymerase III subunit delta' (holB).